A 553-amino-acid polypeptide reads, in one-letter code: CTP synthase (553 aa).

Residues 1–278 are amidoligase domain; sequence MVRRTHGNSQ…DAYVVRELGL (278 aa). Ser-25 is a binding site for CTP. Ser-25 lines the UTP pocket. ATP is bound by residues 26-31 and Asp-83; that span reads SLGKGL. Mg(2+) is bound by residues Asp-83 and Glu-152. Residues 159 to 161, 199 to 204, and Lys-235 contribute to the CTP site; these read DIE and KTKPTQ. UTP is bound by residues 199 to 204 and Lys-235; that span reads KTKPTQ. The Glutamine amidotransferase type-1 domain occupies 303–552; that stretch reads NIAIVGKYID…VKAALDHQAA (250 aa). Gly-366 contributes to the L-glutamine binding site. Cys-393 serves as the catalytic Nucleophile; for glutamine hydrolysis. Residues 394-397, Glu-417, and Arg-478 contribute to the L-glutamine site; that span reads LGLQ. Active-site residues include His-525 and Glu-527.

It belongs to the CTP synthase family. Homotetramer.

The catalysed reaction is UTP + L-glutamine + ATP + H2O = CTP + L-glutamate + ADP + phosphate + 2 H(+). It catalyses the reaction L-glutamine + H2O = L-glutamate + NH4(+). It carries out the reaction UTP + NH4(+) + ATP = CTP + ADP + phosphate + 2 H(+). The protein operates within pyrimidine metabolism; CTP biosynthesis via de novo pathway; CTP from UDP: step 2/2. With respect to regulation, allosterically activated by GTP, when glutamine is the substrate; GTP has no effect on the reaction when ammonia is the substrate. The allosteric effector GTP functions by stabilizing the protein conformation that binds the tetrahedral intermediate(s) formed during glutamine hydrolysis. Inhibited by the product CTP, via allosteric rather than competitive inhibition. Its function is as follows. Catalyzes the ATP-dependent amination of UTP to CTP with either L-glutamine or ammonia as the source of nitrogen. Regulates intracellular CTP levels through interactions with the four ribonucleotide triphosphates. This Bifidobacterium longum (strain NCC 2705) protein is CTP synthase.